An 802-amino-acid polypeptide reads, in one-letter code: Copper-exporting P-type ATPase (802 aa).

2 HMA domains span residues 5-70 (KKTT…YGVA) and 72-138 (ETVE…YDAS). Cu(+)-binding residues include Cys-16, Cys-19, Cys-83, and Cys-86. Helical transmembrane passes span 161–181 (LIIS…HLFN), 192–212 (WFQF…FYVG), 224–244 (MDVL…YEMV), 256–276 (LYFE…YLEA), 411–431 (YFVP…ITLV), and 438–458 (PALV…LGLA). Asp-495 acts as the 4-aspartylphosphate intermediate in catalysis. Mg(2+) contacts are provided by Asp-690 and Asp-694. The next 2 membrane-spanning stretches (helical) occupy residues 748–767 (LFWA…LGLL) and 771–790 (VAGA…ALRL).

The protein belongs to the cation transport ATPase (P-type) (TC 3.A.3) family. Type IB subfamily.

The protein resides in the cell membrane. The enzyme catalyses Cu(+)(in) + ATP + H2O = Cu(+)(out) + ADP + phosphate + H(+). Involved in copper export. The protein is Copper-exporting P-type ATPase (copA) of Staphylococcus aureus (strain MW2).